A 423-amino-acid polypeptide reads, in one-letter code: MAKIVVTGGAALHGEVSISGAKNAVLPILCATLLADEPVEITNVPHLHDVVTTVKLLGELGAKVTIDQGTLSRGSAIVVDPRSVNQHVAPYELVKTMRASILVLGPLLARFGAAEVSLPGGCAIGSRPVDQHIKGLQALGAEIVVENGFIKATAKRLKGGHFTFDMVSVTGTENVLMGAVLAEGTTILDNCAMEPEVTDLAHCLIALGAKIEGLGTARLVIEGVERLSGGRHEVLPDRIETGTFLVAAAMTGGKVTVNRARPNTMDAVLSKLVEAGAKIETTDDTITLDMQGKRPKAVNLTTAPYPAFPTDMQAQFMALNCVADGVGVINETIFENRFMHVNELLRLGADIQVEGHTAIVRGNEHLSGAPVMATDLRASASLILAGLMASGETTIDRIYHLDRGYENIEEKLSSLGATIRRVP.

22–23 (KN) is a phosphoenolpyruvate binding site. Arg-98 contributes to the UDP-N-acetyl-alpha-D-glucosamine binding site. Cys-122 (proton donor) is an active-site residue. Residue Cys-122 is modified to 2-(S-cysteinyl)pyruvic acid O-phosphothioketal. UDP-N-acetyl-alpha-D-glucosamine contacts are provided by residues 127–131 (RPVDQ), Asp-311, and Ile-333.

This sequence belongs to the EPSP synthase family. MurA subfamily.

It localises to the cytoplasm. It catalyses the reaction phosphoenolpyruvate + UDP-N-acetyl-alpha-D-glucosamine = UDP-N-acetyl-3-O-(1-carboxyvinyl)-alpha-D-glucosamine + phosphate. The protein operates within cell wall biogenesis; peptidoglycan biosynthesis. Its function is as follows. Cell wall formation. Adds enolpyruvyl to UDP-N-acetylglucosamine. The sequence is that of UDP-N-acetylglucosamine 1-carboxyvinyltransferase from Stenotrophomonas maltophilia (strain R551-3).